The chain runs to 169 residues: MAPKKAKRRAAGGEGSSNVFSMFEQSQIQEYKEAFTIIDQNRDGIISKDDLRDVLASMGQLNVKNEELEAMIKEASGPINFTVFLTMFGEKLKGADPEDVIVSAFKVLDPEGTGSIKKEFLEELLTTQCDRFTAEEMKNLWAAFPPDVAGNVDYKNICYVITHGEEKEE.

Residue serine 21 is modified to Phosphoserine. EF-hand domains are found at residues 26-61, 96-131, and 132-167; these read SQIQEYKEAFTIIDQNRDGIISKDDLRDVLASMGQL, DPEDVIVSAFKVLDPEGTGSIKKEFLEELLTTQCDR, and FTAEEMKNLWAAFPPDVAGNVDYKNICYVITHGEEK. Ca(2+)-binding residues include aspartate 39, asparagine 41, aspartate 43, and aspartate 50.

Myosin is a hexamer of 2 heavy chains and 4 light chains. Interacts with nanos3; the interaction negatively regulates mylpfa phosphorylation.

Functionally, myosin regulatory subunit that plays a role to maintain muscle integrity during early development. Plays a role in muscle contraction. In Danio rerio (Zebrafish), this protein is Myosin regulatory light chain 2, skeletal muscle isoform A (mylpfa).